The sequence spans 159 residues: SsrA-binding protein (159 aa).

The protein belongs to the SmpB family.

It localises to the cytoplasm. Functionally, required for rescue of stalled ribosomes mediated by trans-translation. Binds to transfer-messenger RNA (tmRNA), required for stable association of tmRNA with ribosomes. tmRNA and SmpB together mimic tRNA shape, replacing the anticodon stem-loop with SmpB. tmRNA is encoded by the ssrA gene; the 2 termini fold to resemble tRNA(Ala) and it encodes a 'tag peptide', a short internal open reading frame. During trans-translation Ala-aminoacylated tmRNA acts like a tRNA, entering the A-site of stalled ribosomes, displacing the stalled mRNA. The ribosome then switches to translate the ORF on the tmRNA; the nascent peptide is terminated with the 'tag peptide' encoded by the tmRNA and targeted for degradation. The ribosome is freed to recommence translation, which seems to be the essential function of trans-translation. The chain is SsrA-binding protein from Acidothermus cellulolyticus (strain ATCC 43068 / DSM 8971 / 11B).